The chain runs to 69 residues: uncharacterized protein (69 aa).

An HTH cro/C1-type domain is found at 5 to 60; the sequence is IREHRKELGLTQEELAERVGVTRQTIIALEKGRYSPSLILAHRIARALGREHIEDI. Positions 16–35 form a DNA-binding region, H-T-H motif; that stretch reads QEELAERVGVTRQTIIALEK.

This is an uncharacterized protein from Methanothermobacter thermautotrophicus (strain ATCC 29096 / DSM 1053 / JCM 10044 / NBRC 100330 / Delta H) (Methanobacterium thermoautotrophicum).